The chain runs to 2183 residues: Coagulation factor V (2183 aa).

Positions 1–19 are cleaved as a signal peptide; it reads MLLVCPCFFLLVVLGTRWA. Plastocyanin-like domains are found at residues 30–192, 202–328, 347–524, and 534–682; these read QLRQ…LLIC, TQKM…IKNC, KRWE…LLIC, and VQRV…DVKC. F5/8 type A domains are found at residues 30 to 328 and 347 to 682; these read QLRQ…IKNC and KRWE…DVKC. The Ca(2+) site is built by Asp-138 and Asp-139. N-linked (GlcNAc...) asparagine glycosylation is found at Asn-176, Asn-238, and Asn-381. Thr-638 is modified (phosphothreonine). A b region spans residues 691-1533; it reads SYEIYEPPAP…PDTIAAWYLR (843 aa). A sulfotyrosine mark is found at Tyr-692 and Tyr-725. A propeptide spans 737–1533 (activation peptide (connecting region)); the sequence is SFKNSSLNPE…PDTIAAWYLR (797 aa). Asn-841 is a glycosylation site (N-linked (GlcNAc...) asparagine). 3 disordered regions span residues 884–904, 947–1045, and 1059–1144; these read PAGK…MKSE, DVDK…FPDR, and ETAL…YDLS. The 1 X 17 AA tandem repeats stretch occupies residues 892-908; that stretch reads SNPKNSYSGMKSEEDIP. A 1-1 repeat occupies 892 to 911; it reads SNPKNSYSGMKSEEDIPSEL. The residue at position 903 (Ser-903) is a Phosphoserine. A compositionally biased stretch (polar residues) spans 951 to 975; that stretch reads LTNSPQNQNITVPRGESTSHTNTTR. N-linked (GlcNAc...) asparagine glycans are attached at residues Asn-959 and Asn-972. The span at 1010-1021 shows a compositional bias: basic residues; sequence RTRKKKKNKKLA. Composition is skewed to polar residues over residues 1059 to 1099 and 1120 to 1134; these read ETAL…SLDL and THST…SPPE. Repeat copies occupy residues 1175-1183, 1184-1192, 1193-1201, 1202-1210, 1211-1219, 1220-1228, 1229-1237, 1238-1246, 1247-1255, 1256-1264, 1265-1273, 1274-1282, 1283-1291, 1292-1299, 1300-1308, 1309-1316, 1317-1325, 1326-1334, 1335-1341, 1342-1350, 1351-1359, 1360-1368, 1369-1377, 1378-1386, 1387-1395, 1396-1404, 1405-1413, 1414-1422, 1423-1431, 1432-1440, 1441-1449, and 1452-1461. The 32 X 9 AA approximate tandem repeats of [TNP]-L-S-P-D-L-S-Q-T stretch occupies residues 1175–1461; sequence IPSSDLSLFT…PSPSPTLNNT (287 aa). The segment at 1204-1312 is disordered; the sequence is SPEDNQKTSS…PDLGQVPLFP (109 aa). A compositionally biased stretch (polar residues) spans 1228 to 1251; sequence KTSSPDLGQVSLSPDDNQKTSSPD. The span at 1292–1304 shows a compositional bias: polar residues; sequence PLSSDNQKTSSPD. A disordered region spans residues 1403-1462; it reads QTNPALNHGHKASSADPDQASYPPDSGQASSLPELNRTLPHPDLTHIPPPSPSPTLNNTS. Residue Asn-1438 is glycosylated (N-linked (GlcNAc...) asparagine). Plastocyanin-like domains are found at residues 1538-1711 and 1721-1866; these read HKKF…LLIC and NLPM…DKEC. The F5/8 type A 3 domain occupies 1538–1866; that stretch reads HKKFYYIAAE…TPFLIIDKEC (329 aa). Residues His-1802 and His-1804 each contribute to the Cu cation site. The N-linked (GlcNAc...) asparagine glycan is linked to Asn-1811. F5/8 type C domains lie at 1866–2020 and 2025–2180; these read CKMP…LQGC and CSTP…LFGC. Cystine bridges form between Cys-1866–Cys-2020 and Cys-2025–Cys-2180.

It belongs to the multicopper oxidase family. In terms of assembly, factor Va, the activated form of factor V, is composed of a heavy chain and a light chain, non-covalently bound. The interaction between the two chains is calcium-dependent. Forms heterodimer with SERPINA5. Post-translationally, thrombin activates factor V proteolytically to the active cofactor, factor Va (formation of a heavy chain at the N-terminus and a light chain at the C-terminus). In terms of processing, sulfation is required for efficient thrombin cleavage and activation and for full procoagulant activity. Activated protein C inactivates factor V and factor Va by proteolytic degradation.

It is found in the secreted. Its activity is regulated as follows. Inhibited by SERPINA5. Central regulator of hemostasis. It serves as a critical cofactor for the prothrombinase activity of factor Xa that results in the activation of prothrombin to thrombin. In Mus musculus (Mouse), this protein is Coagulation factor V (F5).